A 295-amino-acid polypeptide reads, in one-letter code: Origin of replication complex subunit 6 (295 aa).

The interval 212 to 295 (PSKRKHDDDS…MALEVSSAAN (84 aa)) is disordered. Over residues 220–236 (DSDSSGESSGDDQDELD) the composition is skewed to acidic residues. A compositionally biased stretch (polar residues) spans 254 to 263 (WKSSVLSNKQ).

It belongs to the ORC6 family. As to quaternary structure, component of the origin recognition complex (ORC) composed of at least ORC1, ORC2, ORC3, ORC4, ORC5 and ORC6. ORC is regulated in a cell-cycle and development dependent manner. It is sequentially assembled at the exit from anaphase of mitosis and disassembled as cells enter S phase.

It localises to the nucleus. Functionally, component of the origin recognition complex (ORC) that binds origins of replication. DNA-binding is ATP-dependent. The specific DNA sequences that define origins of replication have not been identified yet. ORC is required to assemble the pre-replication complex necessary to initiate DNA replication. This chain is Origin of replication complex subunit 6, found in Oryza sativa subsp. japonica (Rice).